The primary structure comprises 427 residues: Putative F-box/FBD/LRR-repeat protein At4g13965 (427 aa).

Residues 13-61 (ADRISQLPEALIIQILSLLPTEVAVTTSVLSKQWQFLWKMLPKLNFDSL) form the F-box domain. LRR repeat units follow at residues 67–93 (FKTF…HLIV), 98–122 (CNSM…VLEV), 141–168 (TLEL…HLHY), 169–194 (VDFK…VVHR), 213–241 (LTIY…KIVG), and 258–284 (SMIV…FLEF). Residues 346–396 (KWNKPKIVPECLLFHLETFMWKGYEWKRNDETEVAKYILSNTNRLKRATFF) form the FBD domain.

In Arabidopsis thaliana (Mouse-ear cress), this protein is Putative F-box/FBD/LRR-repeat protein At4g13965.